Consider the following 338-residue polypeptide: Queuosine 5'-phosphate N-glycosylase/hydrolase (338 aa).

N-acetylmethionine is present on M1. The queuine site is built by H51, F235, D237, D311, Y312, and D316. The active-site Nucleophile or transition state stabilizer is the D237.

This sequence belongs to the QNG1 protein family. Highly expressed in liver.

It carries out the reaction queuosine 5'-phosphate + H2O = queuine + D-ribose 5-phosphate. In terms of biological role, catalyzes the hydrolysis of queuosine 5'-phosphate, releasing the nucleobase queuine (q). Is required for salvage of queuine from exogenous queuosine (Q) that is imported and then converted to queuosine 5'-phosphate intracellularly. The chain is Queuosine 5'-phosphate N-glycosylase/hydrolase from Mus musculus (Mouse).